The sequence spans 180 residues: ATP synthase subunit delta (180 aa).

It belongs to the ATPase delta chain family. In terms of assembly, F-type ATPases have 2 components, F(1) - the catalytic core - and F(0) - the membrane proton channel. F(1) has five subunits: alpha(3), beta(3), gamma(1), delta(1), epsilon(1). CF(0) has four main subunits: a(1), b(1), b'(1) and c(10-14). The alpha and beta chains form an alternating ring which encloses part of the gamma chain. F(1) is attached to F(0) by a central stalk formed by the gamma and epsilon chains, while a peripheral stalk is formed by the delta, b and b' chains.

It is found in the cellular thylakoid membrane. F(1)F(0) ATP synthase produces ATP from ADP in the presence of a proton or sodium gradient. F-type ATPases consist of two structural domains, F(1) containing the extramembraneous catalytic core and F(0) containing the membrane proton channel, linked together by a central stalk and a peripheral stalk. During catalysis, ATP synthesis in the catalytic domain of F(1) is coupled via a rotary mechanism of the central stalk subunits to proton translocation. Its function is as follows. This protein is part of the stalk that links CF(0) to CF(1). It either transmits conformational changes from CF(0) to CF(1) or is implicated in proton conduction. This is ATP synthase subunit delta from Prochlorococcus marinus (strain MIT 9301).